We begin with the raw amino-acid sequence, 291 residues long: Peptide methionine sulfoxide reductase MsrB/MsrA (291 aa).

Residues 1–124 enclose the MsrB domain; the sequence is MLANLQHLSD…NSAALRFVAR (124 aa). The Nucleophile role is filled by Cys113. The peptide methionine sulfoxide reductase A stretch occupies residues 127 to 284; sequence GTALFAAGCF…PGGYCHVSLH (158 aa). Cys135 is an active-site residue.

It in the N-terminal section; belongs to the MsrB Met sulfoxide reductase family. The protein in the C-terminal section; belongs to the MsrA Met sulfoxide reductase family.

The enzyme catalyses L-methionyl-[protein] + [thioredoxin]-disulfide + H2O = L-methionyl-(R)-S-oxide-[protein] + [thioredoxin]-dithiol. It carries out the reaction L-methionyl-[protein] + [thioredoxin]-disulfide + H2O = L-methionyl-(S)-S-oxide-[protein] + [thioredoxin]-dithiol. It catalyses the reaction [thioredoxin]-disulfide + L-methionine + H2O = L-methionine (S)-S-oxide + [thioredoxin]-dithiol. In terms of biological role, has an important function as a repair enzyme for proteins that have been inactivated by oxidation. Catalyzes the reversible oxidation-reduction of methionine sulfoxide in proteins to methionine. This is Peptide methionine sulfoxide reductase MsrB/MsrA (msrAB) from Treponema pallidum (strain Nichols).